The chain runs to 508 residues: Transposase (508 aa).

The region spanning 3–65 (LLSVIRRWHF…PFADRLSAWL (63 aa)) is the HTH IS21-type domain. The 176-residue stretch at 124 to 299 (LAFEPGEAFQ…TIADIWVEEV (176 aa)) folds into the Integrase catalytic domain.

Belongs to the transposase IS21/IS408/IS1162 family.

Functionally, required for the transposition of the insertion element. This is Transposase (nmoT) from Aminobacter aminovorans (Chelatobacter heintzii).